Consider the following 353-residue polypeptide: MARTVSLWRREAVFLTAMLATETGVVGISTLFKVATSKGLNLYAFLGYSYLLASLLLLPSLFFTDRSRSLPPLSLSILSKIGLLGLLGSMYVITGYIGIEYSSPTLASAISNITPALTFILAIIFRMEKVSFKERSSVAKVMGTILSLIGALVVVLYHGPRVFVASSPPYINFRQLSPPLSSSNSDWLIGGALLTIRDIFVSVSFILQAKIMSTYPAAFTVSFLYIVSVSIVTSMIGLVVEKNNPSVWIIRFDITLITIVTMAIITSVYYVIHSWTVRHKGPLYLAIFKPLSILIAVVMSAVFLNDSLYLGCLIGGLLITLGFYAVMWGKANEEKDQLLLVSGKERTPLLLNG.

10 consecutive transmembrane segments (helical) span residues 12–32 (AVFLTAMLATETGVVGISTLF), 43–63 (YAFLGYSYLLASLLLLPSLFF), 81–101 (IGLLGLLGSMYVITGYIGIEY), 105–125 (TLASAISNITPALTFILAIIF), 137–157 (SVAKVMGTILSLIGALVVVLY), 187–207 (WLIGGALLTIRDIFVSVSFIL), 219–239 (FTVSFLYIVSVSIVTSMIGLV), 252–272 (FDITLITIVTMAIITSVYYVI), 283–303 (LYLAIFKPLSILIAVVMSAVF), and 308–328 (LYLGCLIGGLLITLGFYAVMW). The EamA domain occupies 27 to 155 (GISTLFKVAT…LSLIGALVVV (129 aa)).

The protein belongs to the drug/metabolite transporter (DMT) superfamily. Plant drug/metabolite exporter (P-DME) (TC 2.A.7.4) family.

It is found in the membrane. The protein is WAT1-related protein At3g28100 of Arabidopsis thaliana (Mouse-ear cress).